The primary structure comprises 156 residues: Small ribosomal subunit protein uS7cz/uS7cy (156 aa).

It belongs to the universal ribosomal protein uS7 family. As to quaternary structure, part of the 30S ribosomal subunit.

It is found in the plastid. The protein resides in the chloroplast. In terms of biological role, one of the primary rRNA binding proteins, it binds directly to 16S rRNA where it nucleates assembly of the head domain of the 30S subunit. The sequence is that of Small ribosomal subunit protein uS7cz/uS7cy (rps7-A) from Saccharum hybrid (Sugarcane).